Here is a 453-residue protein sequence, read N- to C-terminus: Signal recognition particle protein (453 aa).

GTP is bound by residues 107–114 (GLQGAGKT), 190–194 (DTAGR), and 248–251 (TKVD).

The protein belongs to the GTP-binding SRP family. SRP54 subfamily. Part of the signal recognition particle protein translocation system, which is composed of SRP and FtsY. SRP is a ribonucleoprotein composed of Ffh and a 4.5S RNA molecule.

It is found in the cytoplasm. It catalyses the reaction GTP + H2O = GDP + phosphate + H(+). Functionally, involved in targeting and insertion of nascent membrane proteins into the cytoplasmic membrane. Binds to the hydrophobic signal sequence of the ribosome-nascent chain (RNC) as it emerges from the ribosomes. The SRP-RNC complex is then targeted to the cytoplasmic membrane where it interacts with the SRP receptor FtsY. Interaction with FtsY leads to the transfer of the RNC complex to the Sec translocase for insertion into the membrane, the hydrolysis of GTP by both Ffh and FtsY, and the dissociation of the SRP-FtsY complex into the individual components. The protein is Signal recognition particle protein of Escherichia coli O157:H7.